A 236-amino-acid polypeptide reads, in one-letter code: Proteasome subunit beta type-1 (236 aa).

This sequence belongs to the peptidase T1B family. The 26S proteasome consists of a 20S proteasome core and two 19S regulatory subunits. The 20S proteasome core is composed of 28 subunits that are arranged in four stacked rings, resulting in a barrel-shaped structure. The two end rings are each formed by seven alpha subunits, and the two central rings are each formed by seven beta subunits. The catalytic chamber with the active sites is on the inside of the barrel.

Its subcellular location is the cytoplasm. It is found in the nucleus. In terms of biological role, non-catalytic component of the proteasome, a multicatalytic proteinase complex which is characterized by its ability to cleave peptides with Arg, Phe, Tyr, Leu, and Glu adjacent to the leaving group at neutral or slightly basic pH. The proteasome has an ATP-dependent proteolytic activity. This is Proteasome subunit beta type-1 (psmB1) from Dictyostelium discoideum (Social amoeba).